Here is a 298-residue protein sequence, read N- to C-terminus: MSLYPSLEDLKVDKVIQAQTAFSANPANPAILSEASAPIPHDGNLYPRLYPELSQYMGLSLNEEEIRANVAVVSGAPLQGQLVARPSSINYMVAPVTGNDVGIRRAEIKQGIREVILCKDQDGKIGLRLKSIDNGIFVQLVQANSPASLVGLRFGDQVLQINGENCAGWSSDKAHKVLKQAFGEKITMTIRDRPFERTITMHKDSTGHVGFIFKNGKITSIVKDSSAARNGLLTEHNICEINGQNVIGLKDSQIADILSTSGTVVTITIMPAFIFEHIIKRMAPSIMKSLMDHTIPEV.

The residue at position 2 (Ser-2) is an N-acetylserine. Residues 2–60 (SLYPSLEDLKVDKVIQAQTAFSANPANPAILSEASAPIPHDGNLYPRLYPELSQYMGLS) form an interaction with PDCD6IP region. Short sequence motifs (LYPX(n)L motif) lie at residues 3 to 7 (LYPSL), 45 to 49 (LYPRL), and 49 to 53 (LYPEL). The residue at position 6 (Ser-6) is a Phosphoserine. A Phosphotyrosine modification is found at Tyr-46. 2 PDZ domains span residues 114–193 (EVIL…IRDR) and 198–273 (TITM…MPAF). A 1,2-diacyl-sn-glycero-3-phospho-(1D-myo-inositol-4,5-bisphosphate) contacts are provided by residues Asn-215 and 250–251 (KD).

Monomer and homodimer. Interacts with SDC1, SDC2, SDC3, SDC4, NRXN2, EPHA7, EPHB1, NF2 isoform 1, TGFA and IL5RA. Interacts with NFASC and PTPRJ. Interacts with SDCBP2. Interacts with PDCD6IP. Forms a complex with PDCD6IP and SDC2. Interacts (via C-terminus) with TGFBR1. Binds to FZD7; this interaction is increased by inositol trisphosphate (IP3). Interacts with SMO. Phosphorylated on tyrosine residues. Expressed in lung cancers, including adenocarcinoma, squamous cell carcinoma and small-cell carcinoma (at protein level). Widely expressed. Expressed in fetal kidney, liver, lung and brain. In adult highest expression in heart and placenta.

Its subcellular location is the cell junction. The protein resides in the focal adhesion. The protein localises to the adherens junction. It is found in the cell membrane. It localises to the endoplasmic reticulum membrane. Its subcellular location is the nucleus. The protein resides in the melanosome. The protein localises to the cytoplasm. It is found in the cytosol. It localises to the cytoskeleton. Its subcellular location is the secreted. The protein resides in the extracellular exosome. The protein localises to the membrane raft. Functionally, multifunctional adapter protein involved in diverse array of functions including trafficking of transmembrane proteins, neuro and immunomodulation, exosome biogenesis, and tumorigenesis. Positively regulates TGFB1-mediated SMAD2/3 activation and TGFB1-induced epithelial-to-mesenchymal transition (EMT) and cell migration in various cell types. May increase TGFB1 signaling by enhancing cell-surface expression of TGFR1 by preventing the interaction between TGFR1 and CAV1 and subsequent CAV1-dependent internalization and degradation of TGFR1. In concert with SDC1/4 and PDCD6IP, regulates exosome biogenesis. Regulates migration, growth, proliferation, and cell cycle progression in a variety of cancer types. In adherens junctions may function to couple syndecans to cytoskeletal proteins or signaling components. Seems to couple transcription factor SOX4 to the IL-5 receptor (IL5RA). May also play a role in vesicular trafficking. Seems to be required for the targeting of TGFA to the cell surface in the early secretory pathway. The chain is Syntenin-1 (SDCBP) from Homo sapiens (Human).